The primary structure comprises 312 residues: Glycine--tRNA ligase alpha subunit (312 aa).

The protein belongs to the class-II aminoacyl-tRNA synthetase family. As to quaternary structure, tetramer of two alpha and two beta subunits.

It is found in the cytoplasm. The enzyme catalyses tRNA(Gly) + glycine + ATP = glycyl-tRNA(Gly) + AMP + diphosphate. This Nostoc punctiforme (strain ATCC 29133 / PCC 73102) protein is Glycine--tRNA ligase alpha subunit.